The sequence spans 149 residues: Transcriptional regulator MraZ (149 aa).

2 consecutive SpoVT-AbrB domains span residues 6-52 and 81-124; these read RSHR…PLPD and AELM…DQGR.

The protein belongs to the MraZ family. In terms of assembly, forms oligomers.

It is found in the cytoplasm. The protein localises to the nucleoid. The chain is Transcriptional regulator MraZ from Nitratidesulfovibrio vulgaris (strain DSM 19637 / Miyazaki F) (Desulfovibrio vulgaris).